Here is a 592-residue protein sequence, read N- to C-terminus: Elongation factor 1 alpha-like protein (592 aa).

2 disordered regions span residues 1-35 (MSRHRDVKNLDLDDYELDEEPGEEELTEEQEEEFR) and 78-159 (SSKA…KQNP). Residues 12–32 (LDDYELDEEPGEEELTEEQEE) are compositionally biased toward acidic residues. The segment covering 82-111 (GAKEKQNTDSQKEKKQNKSKEALADAKDPL) has biased composition (basic and acidic residues). Polar residues predominate over residues 113–124 (ESSNGIKNLSLN). Positions 137-151 (VKMKNSSESDNQPEK) are enriched in basic and acidic residues. The region spanning 175 to 401 (KPVVHLVVTG…DQLVPPEKPY (227 aa)) is the tr-type G domain. The interval 184–191 (GHVDSGKS) is G1. Position 184–191 (184–191 (GHVDSGKS)) interacts with GTP. The interval 240 to 244 (GVTMD) is G2. The tract at residues 261-264 (DAPG) is G3. Residues 323–326 (NKLD) and 352–355 (FKTS) contribute to the GTP site. A G4 region spans residues 323 to 326 (NKLD). The interval 363–365 (SAI) is G5.

Belongs to the TRAFAC class translation factor GTPase superfamily. Classic translation factor GTPase family. In terms of assembly, component of the Dom34-Hbs1 complex, also named Pelota-HBS1L complex, composed of dom34 and hbs1.

Its subcellular location is the cytoplasm. The enzyme catalyses GTP + H2O = GDP + phosphate + H(+). Functionally, GTPase component of the Dom34-Hbs1 complex, a complex that recognizes stalled ribosomes and triggers the No-Go Decay (NGD) pathway. The Dom34-Hbs1 complex recognizes ribosomes stalled at the 3' end of an mRNA and engages stalled ribosomes by destabilizing mRNA in the mRNA channel. Following ribosome-binding, the Pelota-HBS1L complex promotes the disassembly of stalled ribosomes, followed by degradation of damaged mRNAs as part of the NGD pathway. This Schizosaccharomyces pombe (strain 972 / ATCC 24843) (Fission yeast) protein is Elongation factor 1 alpha-like protein.